A 360-amino-acid chain; its full sequence is MNHVILYCRPGFEKECAGEVQDKANKLELFGFPRTKNNTGYVVFEFHQQGDADKFIKLQPFSSLIFARQMFAATKLLTDLPQEDRISPILEAVKGFPRCGELRIETPDTNEAKELLKFCRKFTVPLRQAMRKKDVLYAQDSTWKPVLHVCFIAPGCCFVGYSYTNNNSQFFMGIPRLKFPSDAPSRSTLKLEEAFHVFIPRDEWDERLAPGMWGVDLGACPGGWTYQLVKRSMFVHAIDNGQMAQSLMDTGQVKYHAVDGFKFEPARKNVTWIVCDMIEKPARVAHLMGEWLVKAWAKEAIFNLKLPMKGRYDEVLQDIENLKQYFIKNGMKFELQAKHLYHDREEITVHVRCLDNRSPH.

S-adenosyl-L-methionine is bound by residues Ser187, 220–223 (CPGG), Asp239, Asp259, and Asp276. The active-site Proton acceptor is the Lys305.

Belongs to the class I-like SAM-binding methyltransferase superfamily. RNA methyltransferase RlmE family. RlmM subfamily. As to quaternary structure, monomer.

The protein resides in the cytoplasm. It catalyses the reaction cytidine(2498) in 23S rRNA + S-adenosyl-L-methionine = 2'-O-methylcytidine(2498) in 23S rRNA + S-adenosyl-L-homocysteine + H(+). Functionally, catalyzes the 2'-O-methylation at nucleotide C2498 in 23S rRNA. The protein is Ribosomal RNA large subunit methyltransferase M of Photobacterium profundum (strain SS9).